Here is a 404-residue protein sequence, read N- to C-terminus: DNA polymerase processivity factor BMRF1 (404 aa).

Residues Met-1–Glu-300 are homodimerization; DNA binding and DNA polymerase processivity. The segment at Glu-301–Ile-404 is transcriptional activation. The interval Ala-302–Ile-404 is disordered. The span at Ser-335–Thr-344 shows a compositional bias: pro residues. Ser-337 bears the Phosphoserine mark. A Phosphothreonine modification is found at Thr-344. Ser-349 is modified (phosphoserine). Residue Thr-355 is modified to Phosphothreonine.

The protein belongs to the herpesviridae DNA polymerase accessory subunit family. Homodimer. Two dimers can adopt a tetrameric ring-like structure. Forms a complex with the DNA-binding protein BALF2, the DNA polymerase subunit BALF5, and the alkaline exonuclease BGLF5. Interacts (via N-terminus) with BZLF1 (via bZIP domain); this interaction may inhibit BZLF1-induced transcription of the BMRF1 promoter. Interacts (via C-terminus) with host NuRD complex; this interaction is important for transcriptional activation of EBV promoters and inhibition of the ubiquitination step of DDR signaling. Phosphorylated by the viral BGLF4 kinase.

Its subcellular location is the virion tegument. The protein resides in the host nucleus. Acts as a DNA polymerase processivity factor; a transcriptional activator for several EBV promoters and inhibits the host DNA damage response (DDR) to double-stranded DNA breaks. Plays an essential role in the viral lytic DNA replication by acting as a polymerase accessory subunit. Stimulates the viral DNA polymerase activity and appears to function with it as a holoenzyme. Increases the processivity of the viral polymerase, probably by acting as a sliding clamp that prevents dissociation of the polymerase from the active template. In addition, BMRF1 transcriptionally activates the oriLyt early BHLF1 promoter. Promotes G1/S cell cycle arrest through p53 induction. The polypeptide is DNA polymerase processivity factor BMRF1 (Epstein-Barr virus (strain AG876) (HHV-4)).